The primary structure comprises 1240 residues: Phospholipid-transporting ATPase 6 (1240 aa).

The Cytoplasmic segment spans residues 1–75 (MARRRIRSRI…TTRYNLLTFL (75 aa)). The helical transmembrane segment at 76 to 97 (PKCLYEQFHRVANFYFLVAAIL) threads the bilayer. Residues 98–101 (SVFP) lie on the Extracellular side of the membrane. The chain crosses the membrane as a helical span at residues 102–124 (LSPFNKWSMIAPLVFVVGLSMGK). The Cytoplasmic portion of the chain corresponds to 125–306 (EALEDWRRFM…SRIEKRMDYI (182 aa)). A helical membrane pass occupies residues 307 to 328 (IYTLFALLLTVSFISSLGFAVM). The Extracellular portion of the chain corresponds to 329 to 360 (TKLLMAEWWYLRPDKPESLTNPTNPLYAWVVH). The chain crosses the membrane as a helical span at residues 361 to 378 (LITALLLYGYLIPISLYV). Residues 379–943 (SIEVVKVLQA…HGHWCYKRIA (565 aa)) are Cytoplasmic-facing. The active-site 4-aspartylphosphate intermediate is the Asp-426. Residue Lys-625 forms a Glycyl lysine isopeptide (Lys-Gly) (interchain with G-Cter in ubiquitin) linkage. Residues Asp-888 and Asp-892 each contribute to the Mg(2+) site. Residues 944 to 963 (QMICYFFYKNITFGLTLFYF) traverse the membrane as a helical segment. Topologically, residues 964–977 (ECFTGFSGQSIYND) are extracellular. The chain crosses the membrane as a helical span at residues 978-997 (SYLLLFNVVLTSLPVISLGV). Over 998-1027 (FEQDVPSDVCLQFPALYQQGPKNLFFDWYR) the chain is Cytoplasmic. Residues 1028–1050 (ILGWMGNGVYASIVIFTLNLGIF) traverse the membrane as a helical segment. The Extracellular segment spans residues 1051–1063 (HVQSFRSDGQTAD). The helical transmembrane segment at 1064–1086 (MNAMGTAMFTCIIWAVNVQIALT) threads the bilayer. Over 1087-1092 (MSHFTW) the chain is Cytoplasmic. The chain crosses the membrane as a helical span at residues 1093–1113 (IQHVMIWGSIGAWYVFLALYG). The Extracellular portion of the chain corresponds to 1114–1130 (MLPVKLSGNIFHMLVEI). Residues 1131 to 1155 (LAPAPIFWLTSLLVIAATTLPYLFH) form a helical membrane-spanning segment. At 1156–1240 (ISYQRSVNPL…SNDTPSSNSQ (85 aa)) the chain is on the cytoplasmic side.

It belongs to the cation transport ATPase (P-type) (TC 3.A.3) family. Type IV subfamily.

It is found in the cell membrane. It localises to the endomembrane system. The catalysed reaction is ATP + H2O + phospholipidSide 1 = ADP + phosphate + phospholipidSide 2.. Its function is as follows. Involved in transport of phospholipids and in regulation of pollen plasma membrane lipid asymmetry. This Arabidopsis thaliana (Mouse-ear cress) protein is Phospholipid-transporting ATPase 6.